The chain runs to 269 residues: Flagellar hook-basal body complex protein FlhP (269 aa).

Residues 7–65 are a coiled coil; that stretch reads TASTTLNQLQQQIDTISSNLSNSNTTGYKAKDTNFSELVRQQFDQVDEKNEEVAKARKT.

It belongs to the flagella basal body rod proteins family.

The polypeptide is Flagellar hook-basal body complex protein FlhP (flhP) (Bacillus subtilis (strain 168)).